The following is a 3123-amino-acid chain: MKLQHHKTNRQRISKPHRDPKWASICLWLLVTLAFSTHLARSQESRQTEDSKEVELLQDNDIEFASLDGASQLLPATRHSGADVTVAPQGSTPSMTSSSSYTELQGGEILSDRILRRSESPYLARDDIEVLRGARLTIEPGVTIEFAPTKGLKINGVLQAVGTPTSRIVLKSQSNTANYKLELPDDQEKGIRLVDGPTPVEGRLQLFHKGAWRSVCSNSRNWTLADYGVACKQLGYRGGRFWNWVERTPGYYPRLLYEQPKCKGGEGSLQDCAWTSRQMGAGACDYHNDLGIQCLPVHSETLGHWRGIYFDNAPSTKALGRDNIVYAAQSESRLKYVDIIRAGSGAGFNAKSAVEVQGLPPQMEHVVISHSAYTGFNSTRPWAGFQLQNVTVRKCNGIGVFVNSSQGAVQLDGCSIVDNAGDGIKYVGHDLRGTERKDRASIYDFCTLPTTSGQTYPISLSFTQKYYAGSGKECGKYFFTRPGYLLTLHFENFVLMQNETATVEIYDGASTNDRLLFEWKARNFTRPQSVTSTREKMFVRIRADARQELNGFFRMTSGDSVAYDLKVSQSTVEDNGGRGVAIDNIRSKLHVHSSSVSGNGHVAGVHVTSGAGDVNITSSNISFNNGAGVNITYYGGNRNISRSALTANKGYGVATWLNQTSDVNRMEYIPFNQTSVVEYSQIGGNLETGVFHGNFCRPIWVNITGNSFNGSQQNDIFIESCYQATANGRPNMQLQLGHNQFKYSQANSIYLSPALNLQGRIEYNMFRFGSYGCLFINNDYIYPEFNYFPVKLIIQSNYFMRNSGVHVVSLGLSPYSRAEVQYILFTRNFVRGNNITEAFGPLIAGSEGSDGAGRLNPRSRVAAPVVVGSSNVDIFRNILHNLDSMYEIGSQLTDQSKIINATCNWLGHTDENKIYARLFHRNDRYNLAKINYLPYLLHSSNPGSTAMITVSTVVPRFFHEGSDVIGGEVDGQDMVPAGTYTVTKDINIRPGGKLILQPGTTLKFEPSVGMMVAGKLEARGRRPDDILFTLKRETIMGESNDTETIDLDSETEAIDMETEVIPADGVPRVPVRLVGGAGANEGRLQVYLKGRWGTVCDYGWNVLNAALVCHQLGYSLNPQDWRLLRSQLPNAGTSEDILMANVRCTLQDRDVTKCRAEYEFENTCSHENDVGLRCYEGAWAGVRFSMLAERADLQYVTVEKAGLFDYTTNAFKPAVQMDHARHNLENVRIVNNLQDGLGIIYADIYAGKSVNNIKNSEFSGNKGSGISLKQLDFRVSGSIIKDNKGSGVSHDAVISALDQKEIGGWFNMATDFNSFDTDYDPYLLPREISNIDLGTFEHKYIRTEELLGQNINRKIVVQCPAGYVIGIQLLNPIHNLSTESINILNARTENIRSDLWQVKRDLNVFPVTSSSYGIIIYYESGLQALGGAVLMLSTVTAPVQNIRNRIVSGAVPTLTIRSTKIQKNLRGITGIYYNRYIGDNGEYYLRKANESIKLINSELSYNEREAILIRSPFWDVISSNLSEVTLHVNGSLITQNGLGIRQMSKDLRSSNNLFHYVIQDTTFEQNTHGGFQVSLPYVWQYNENFTHSIYFGNSTWQRNRDFRISVSGHYTVFNITSNVFRENNCPGALISLDGMEKRLRFDNNRFESNNAKFVLLFKADSLSEIIGQVPASIEFNSFKGNNIVTMTANYRNHYMKVARRIRKQHKIPTAVIRLDGVQNVRLYRNLIAENEMDYNLVAGVRSARLNNYFEARENWWGTKDTAFIEAKIFDFDNWNDHADVIYQPFLIEDSYDASVSVVVPFNQDQEIDLTNYKGGRVYKDLLLTKQSTPYYISSDITVMPGKTLTINHGVTMEFEPNVGILVLGTLVAIGYRESPIVMRPFRNATRESLIDVQPKKRALEDMSAPLTEFDSIRLCTSANNCTGDADGLFGLNEGFLEYFNHTTLQWVPICDSRFTERNAQVVCRELGYDPLNVYYGHDRRIEFHTNSLTRIWSWVQPLECRGDEERMEDCAERLNGQLYGHRHECRWDDVFVFVSCNGIADDEVYWGGIRFANSKFEEIQYEHRLHNTRSHARLPLRESQLEFVRIEQAGILHNHKAAAIQAIHKNPSITSVSIENSANHGINMIAPSGKLNLNHLNINNTLGTGISIVSLSGEGRDSDESSFTPLKKLDLPYKLFSLVDICDPQKVLTIEERMLIYYKYDNNPVNCVKIFTSAFRAKPIGFRLLQSNLFNHSKLYGRTDFIKLYDGDIYNVTATYLGKIESDTDNQRSFFKTKGPTMSLQLVASGAPETHGFIAEVVTVPISTLGQYRDALHNITDTHISGAIKGAVTYSSAGEVTPTLTLIGNRIEKNCRQLYGNFSTCTSALNLDVQNMNSLYFMNNLITENQGGLRIRADSRGSATSLRGFVHHNLFMRNRNRPALYVEGRQSSPYQEVELYRNYFAQNMAGYEDVIRLCQVVSNFSYNYVHSNVGGRIMEVSGFEKVRLQIYQTTAHNGFYRNFATNWMTRATIVAGTAGQQYVDNIFENHENDYELLTVNNSILSFDYENRTFETWSSKIDARHNYWSYNNTISVQSRIRDKSDDPMLLEVLAVPFQMNNETILDGKCPPGWALVHDTCFIYVGAPMTFHEARDFCRSENSTMPFIRTDKTTLWKYLQSQMRHLKYPDKVWIQDYNHIDRCTSFVFGEIEIEDCNKERGFICESDPRVIIDPLSWRADIFAISIISAFVLAIILLILVAFCWFAKSKHRHTQRLQRRNSIRQSLRSLNSIDPQGSLRRRPNYNMSSNGTLSKGQDYKQMVANGSIDSMDKSVLSSEAGSFEGYEQKPHYNEYVNQNALRPAHPAQDHQSHKVATISKASGHRARAAAAAAAALEPDAFELSYRNEGFRDNSTYGDNTRANSISTSVAEDTPIIHHTDQEIDEGGSDYYGNASTLPLRTEGGTPAGRRGQPGLAFLSELKQNLPEYQRSSHSSFMPHRSSGDSLPFDQKLDQFNYSTESSLYRPAPAVPSSQQATPADMRRPDSYYTAVRSSKAPVSHYRTPRPLAQPPAAPNVAPAGGPAQRRPKTVYQTASEESSPTTPSPLTNQYHRSKSEALLETDFDGDGGSVGLQPLQTNGRSHSQPLETAM.

A signal peptide spans 1–34 (MKLQHHKTNRQRISKPHRDPKWASICLWLLVTLA). Topologically, residues 35 to 2714 (FSTHLARSQE…IIDPLSWRAD (2680 aa)) are extracellular. Positions 83-104 (DVTVAPQGSTPSMTSSSSYTEL) are disordered. Residues 91–102 (STPSMTSSSSYT) are compositionally biased toward low complexity. The 105-residue stretch at 191-295 (IRLVDGPTPV…YHNDLGIQCL (105 aa)) folds into the SRCR 1 domain. Disulfide bonds link Cys-216/Cys-284, Cys-231/Cys-294, and Cys-262/Cys-272. An N-linked (GlcNAc...) asparagine glycan is attached at Asn-221. PbH1 repeat units follow at residues 358–380 (GLPP…NSTR), 382–404 (WAGF…FVNS), and 406–428 (QGAV…KYVG). Asn-377, Asn-389, and Asn-403 each carry an N-linked (GlcNAc...) asparagine glycan. Cys-446 and Cys-474 are joined by a disulfide. The CUB domain maps to 446–559 (CTLPTTSGQT…NGFFRMTSGD (114 aa)). Asn-498 and Asn-523 each carry an N-linked (GlcNAc...) asparagine glycan. PbH1 repeat units lie at residues 562-584 (AYDL…AIDN), 586-609 (RSKL…HVTS), and 611-633 (AGDV…NITY). Asn-615, Asn-620, Asn-630, Asn-639, Asn-658, Asn-672, Asn-702, and Asn-709 each carry an N-linked (GlcNAc...) asparagine glycan. PbH1 repeat units follow at residues 756–778 (NLQG…FINN) and 789–809 (PVKL…HVVS). N-linked (GlcNAc...) asparagine glycans are attached at residues Asn-834, Asn-900, and Asn-1040. An SRCR 2 domain is found at 1071–1175 (VRLVGGAGAN…HENDVGLRCY (105 aa)). 3 cysteine pairs are disulfide-bonded: Cys-1096–Cys-1164, Cys-1109–Cys-1174, and Cys-1144–Cys-1154. PbH1 repeat units lie at residues 1219 to 1241 (HARH…GIIY) and 1248 to 1270 (KSVN…SLKQ). A glycan (N-linked (GlcNAc...) asparagine) is linked at Asn-1375. 2 PbH1 repeats span residues 1451–1475 (VPTL…YYNR) and 1489–1511 (NESI…LIRS). Residues Asn-1489, Asn-1520, and Asn-1529 are each glycosylated (N-linked (GlcNAc...) asparagine). Residues 1553–1575 (LFHYVIQDTTFEQNTHGGFQVSL) form a PbH1 13 repeat. N-linked (GlcNAc...) asparagine glycosylation is found at Asn-1584, Asn-1593, and Asn-1614. A PbH1 14 repeat occupies 1722-1744 (LYRNLIAENEMDYNLVAGVRSAR). Asn-1883, Asn-1920, and Asn-1940 each carry an N-linked (GlcNAc...) asparagine glycan. The SRCR 3 domain occupies 1912–2037 (IRLCTSANNC…DDVFVFVSCN (126 aa)). 3 disulfides stabilise this stretch: Cys-1950-Cys-2025, Cys-1963-Cys-2036, and Cys-2000-Cys-2010. 2 PbH1 repeats span residues 2104-2126 (HKNP…NMIA) and 2128-2150 (SGKL…SIVS). 5 N-linked (GlcNAc...) asparagine glycosylation sites follow: Asn-2139, Asn-2231, Asn-2251, Asn-2314, and Asn-2357. PbH1 repeat units follow at residues 2337–2361 (TPTL…FSTC), 2372–2393 (MNSL…RIRA), and 2401–2424 (SLRG…YVEG). N-linked (GlcNAc...) asparagine glycosylation is found at Asn-2459, Asn-2536, Asn-2546, Asn-2566, Asn-2596, and Asn-2636. Residues 2715 to 2735 (IFAISIISAFVLAIILLILVA) form a helical membrane-spanning segment. Residues 2736-3123 (FCWFAKSKHR…SHSQPLETAM (388 aa)) lie on the Cytoplasmic side of the membrane. Disordered stretches follow at residues 2766 to 2789 (IDPQ…LSKG), 2961 to 2983 (YQRS…PFDQ), 2996 to 3015 (LYRP…ADMR), and 3025 to 3123 (RSSK…ETAM). The segment covering 2778–2788 (YNMSSNGTLSK) has biased composition (polar residues). Residues 2964 to 2973 (SSHSSFMPHR) show a composition bias toward low complexity. Low complexity-rich tracts occupy residues 3047 to 3057 (PNVAPAGGPAQ) and 3068 to 3078 (SEESSPTTPSP). Polar residues predominate over residues 3107–3123 (PLQTNGRSHSQPLETAM).

In terms of processing, N-glycosylated. May be proteolytically cleaved in the extracellular domain. Expression detected in embryonic epithelia and central nervous system (at protein level). First detected during stage 13 in the tracheal system, the foregut, the hindgut, the salivary glands and the epidermis. Expression persists in these tissues until the end of embryogenesis. Expression in epithelia declines from late stage 15 and expression appears in the central nervous system during stage 16.

The protein resides in the cell membrane. It is found in the cell junction. The protein localises to the septate junction. It localises to the adherens junction. Functionally, required for the maturation but not the establishment of septate junctions in developing epithelial cells and is involved in epithelial cell adhesion during septate junction maturation. Plays a role in the proper localization of the septate junction core components pck/mega, kune, Nrx-IV and Nrg during late embryogenesis. Involved in the formation of tricellular junctions which mediate cell contact where three epithelial cells meet but not of bicellular junctions. Required for the accumulation of Gli at tricellular junctions. This is Protein bark beetle from Drosophila melanogaster (Fruit fly).